A 252-amino-acid chain; its full sequence is Aspartate/glutamate leucyltransferase (252 aa).

This sequence belongs to the R-transferase family. Bpt subfamily.

Its subcellular location is the cytoplasm. The enzyme catalyses N-terminal L-glutamyl-[protein] + L-leucyl-tRNA(Leu) = N-terminal L-leucyl-L-glutamyl-[protein] + tRNA(Leu) + H(+). It carries out the reaction N-terminal L-aspartyl-[protein] + L-leucyl-tRNA(Leu) = N-terminal L-leucyl-L-aspartyl-[protein] + tRNA(Leu) + H(+). In terms of biological role, functions in the N-end rule pathway of protein degradation where it conjugates Leu from its aminoacyl-tRNA to the N-termini of proteins containing an N-terminal aspartate or glutamate. The polypeptide is Aspartate/glutamate leucyltransferase (Xanthomonas campestris pv. campestris (strain B100)).